A 190-amino-acid polypeptide reads, in one-letter code: Adenylate kinase (190 aa).

12 to 17 (GSGKTT) provides a ligand contact to ATP. An NMP region spans residues 34 to 63 (STGELLRAEVASGSERGKIIEGFTSKGNLV). AMP-binding positions include Thr-35, Arg-40, 61–63 (NLV), 88–91 (GYPR), and Gln-95. Residues 130 to 136 (GRARGAD) form an LID region. An ATP-binding site is contributed by Arg-131. Residues Arg-133 and Arg-145 each contribute to the AMP site. Residue Arg-173 participates in ATP binding.

This sequence belongs to the adenylate kinase family. As to quaternary structure, monomer.

Its subcellular location is the cytoplasm. It catalyses the reaction AMP + ATP = 2 ADP. It participates in purine metabolism; AMP biosynthesis via salvage pathway; AMP from ADP: step 1/1. In terms of biological role, catalyzes the reversible transfer of the terminal phosphate group between ATP and AMP. Plays an important role in cellular energy homeostasis and in adenine nucleotide metabolism. The polypeptide is Adenylate kinase (Wolinella succinogenes (strain ATCC 29543 / DSM 1740 / CCUG 13145 / JCM 31913 / LMG 7466 / NCTC 11488 / FDC 602W) (Vibrio succinogenes)).